The sequence spans 296 residues: MSTVDFGRVITAMVTPFHPDMSVNYTQAKKLSRYLVENGSDGLVVSGTTGESPTLNKDEKIQLFKAVVEEVGGQATVIAGTGSYDTASSIILTKEAEKVGCDGVMLVAPYYNKPSQEGLYQHFRTIAECTSLPVMLYNIPGRTGINVLPATVERLAKDVPNIVAIKEAAGDINQVSELRRILPEDFIIFSGDDSLTLPMLSLGCKGIVSVAAHIAGKQIQEMIDAFTSGNTTLAANLHKELFPIFKGLFITSNPVPVKAALNLKGLAVGGVRLPLVEATAKEIETVKNIMNNLHLL.

Position 49 (T49) interacts with pyruvate. Residue Y137 is the Proton donor/acceptor of the active site. K166 serves as the catalytic Schiff-base intermediate with substrate. V208 lines the pyruvate pocket.

Belongs to the DapA family. In terms of assembly, homotetramer; dimer of dimers.

The protein localises to the cytoplasm. It catalyses the reaction L-aspartate 4-semialdehyde + pyruvate = (2S,4S)-4-hydroxy-2,3,4,5-tetrahydrodipicolinate + H2O + H(+). It participates in amino-acid biosynthesis; L-lysine biosynthesis via DAP pathway; (S)-tetrahydrodipicolinate from L-aspartate: step 3/4. Catalyzes the condensation of (S)-aspartate-beta-semialdehyde [(S)-ASA] and pyruvate to 4-hydroxy-tetrahydrodipicolinate (HTPA). The chain is 4-hydroxy-tetrahydrodipicolinate synthase from Desulforamulus reducens (strain ATCC BAA-1160 / DSM 100696 / MI-1) (Desulfotomaculum reducens).